Reading from the N-terminus, the 160-residue chain is MPYVDFWELSRDFLHFASGHHGSNSSVERAVTVSRHNAQGEYNVPLFTAILLIISIATFSALKMGSRQQFLKRAQSLLIFKMKVALQMGGALLTLFASNDGIVEFVRPQRTDEFDLAVCRVVKGETPTATAGALLGRHGSRAGVILRRLRRRITPPFTPP.

This is an uncharacterized protein from Gracula (BFDV).